The sequence spans 290 residues: Phosphatidylglycerol--prolipoprotein diacylglyceryl transferase (290 aa).

Transmembrane regions (helical) follow at residues 21–41 (VSLH…MWLA), 60–80 (LLYA…VLFY), 98–118 (GGMS…WFAH), 124–144 (FFQV…AGRL), 198–218 (SQLY…NLFI), 224–244 (IGSV…LVEF), and 258–278 (VISM…IMMA). A 1,2-diacyl-sn-glycero-3-phospho-(1'-sn-glycerol) is bound at residue Arg143.

The protein belongs to the Lgt family.

The protein localises to the cell inner membrane. It carries out the reaction L-cysteinyl-[prolipoprotein] + a 1,2-diacyl-sn-glycero-3-phospho-(1'-sn-glycerol) = an S-1,2-diacyl-sn-glyceryl-L-cysteinyl-[prolipoprotein] + sn-glycerol 1-phosphate + H(+). Its pathway is protein modification; lipoprotein biosynthesis (diacylglyceryl transfer). Functionally, catalyzes the transfer of the diacylglyceryl group from phosphatidylglycerol to the sulfhydryl group of the N-terminal cysteine of a prolipoprotein, the first step in the formation of mature lipoproteins. The protein is Phosphatidylglycerol--prolipoprotein diacylglyceryl transferase of Sodalis glossinidius (strain morsitans).